The sequence spans 395 residues: ATP phosphoribosyltransferase regulatory subunit (395 aa).

This sequence belongs to the class-II aminoacyl-tRNA synthetase family. HisZ subfamily. Heteromultimer composed of HisG and HisZ subunits.

The protein localises to the cytoplasm. It participates in amino-acid biosynthesis; L-histidine biosynthesis; L-histidine from 5-phospho-alpha-D-ribose 1-diphosphate: step 1/9. Its function is as follows. Required for the first step of histidine biosynthesis. May allow the feedback regulation of ATP phosphoribosyltransferase activity by histidine. The chain is ATP phosphoribosyltransferase regulatory subunit from Pseudomonas fluorescens (strain Pf0-1).